Here is a 147-residue protein sequence, read N- to C-terminus: Large ribosomal subunit protein bL9 (147 aa).

Residues 40-60 form a disordered region; it reads TTGNLKQHEAHERKAAEEAKQ. Positions 45–59 are enriched in basic and acidic residues; sequence KQHEAHERKAAEEAK.

This sequence belongs to the bacterial ribosomal protein bL9 family.

Functionally, binds to the 23S rRNA. This chain is Large ribosomal subunit protein bL9, found in Exiguobacterium sibiricum (strain DSM 17290 / CCUG 55495 / CIP 109462 / JCM 13490 / 255-15).